Consider the following 837-residue polypeptide: Translation initiation factor IF-2 (837 aa).

Positions 94-253 are disordered; it reads KRSPDEIEAE…QHGFQNPTGP (160 aa). Residues 95-148 are compositionally biased toward basic and acidic residues; it reads RSPDEIEAERQRELEEQRAAEEAERLKAEEAAARQRAEEEARKAEEAARAKAAE. Residues 149–171 show a composition bias toward low complexity; the sequence is EAVSAQPAAAVEVAAAEPVAKPA. Basic and acidic residues-rich tracts occupy residues 172–188 and 220–229; these read AAEE…PKRD and STDEESDGYR. Basic residues predominate over residues 230-244; that stretch reads RGGRGGKSKLKKRNQ. Positions 337-506 constitute a tr-type G domain; the sequence is TRAPVVTVMG…LLQAEVLELK (170 aa). Positions 346 to 353 are G1; the sequence is GHVDHGKT. 346–353 is a binding site for GTP; it reads GHVDHGKT. The G2 stretch occupies residues 371–375; sequence GITQH. The interval 392–395 is G3; sequence DTPG. GTP contacts are provided by residues 392-396 and 446-449; these read DTPGH and NKID. Residues 446–449 form a G4 region; that stretch reads NKID. Positions 482-484 are G5; sequence SAK.

Belongs to the TRAFAC class translation factor GTPase superfamily. Classic translation factor GTPase family. IF-2 subfamily.

Its subcellular location is the cytoplasm. One of the essential components for the initiation of protein synthesis. Protects formylmethionyl-tRNA from spontaneous hydrolysis and promotes its binding to the 30S ribosomal subunits. Also involved in the hydrolysis of GTP during the formation of the 70S ribosomal complex. The sequence is that of Translation initiation factor IF-2 from Pseudomonas paraeruginosa (strain DSM 24068 / PA7) (Pseudomonas aeruginosa (strain PA7)).